Here is a 251-residue protein sequence, read N- to C-terminus: 5'-nucleotidase SurE (251 aa).

A divalent metal cation is bound by residues aspartate 8, aspartate 9, serine 40, and asparagine 95.

Belongs to the SurE nucleotidase family. The cofactor is a divalent metal cation.

The protein resides in the cytoplasm. The enzyme catalyses a ribonucleoside 5'-phosphate + H2O = a ribonucleoside + phosphate. In terms of biological role, nucleotidase that shows phosphatase activity on nucleoside 5'-monophosphates. The polypeptide is 5'-nucleotidase SurE (Desulfitobacterium hafniense (strain DSM 10664 / DCB-2)).